We begin with the raw amino-acid sequence, 474 residues long: Bifunctional protein HldE (474 aa).

A ribokinase region spans residues 1–317; the sequence is MKLSMPRFDQ…RRAIQRSEGS (317 aa). 194–197 contacts ATP; sequence NLSE. Asp-263 is an active-site residue. The tract at residues 343 to 474 is cytidylyltransferase; it reads FTNGCFDILH…AIVEKIRNNE (132 aa).

The protein in the N-terminal section; belongs to the carbohydrate kinase PfkB family. It in the C-terminal section; belongs to the cytidylyltransferase family. As to quaternary structure, homodimer.

It catalyses the reaction D-glycero-beta-D-manno-heptose 7-phosphate + ATP = D-glycero-beta-D-manno-heptose 1,7-bisphosphate + ADP + H(+). It carries out the reaction D-glycero-beta-D-manno-heptose 1-phosphate + ATP + H(+) = ADP-D-glycero-beta-D-manno-heptose + diphosphate. It participates in nucleotide-sugar biosynthesis; ADP-L-glycero-beta-D-manno-heptose biosynthesis; ADP-L-glycero-beta-D-manno-heptose from D-glycero-beta-D-manno-heptose 7-phosphate: step 1/4. Its pathway is nucleotide-sugar biosynthesis; ADP-L-glycero-beta-D-manno-heptose biosynthesis; ADP-L-glycero-beta-D-manno-heptose from D-glycero-beta-D-manno-heptose 7-phosphate: step 3/4. Functionally, catalyzes the phosphorylation of D-glycero-D-manno-heptose 7-phosphate at the C-1 position to selectively form D-glycero-beta-D-manno-heptose-1,7-bisphosphate. In terms of biological role, catalyzes the ADP transfer from ATP to D-glycero-beta-D-manno-heptose 1-phosphate, yielding ADP-D-glycero-beta-D-manno-heptose. The protein is Bifunctional protein HldE of Pseudomonas fluorescens (strain SBW25).